We begin with the raw amino-acid sequence, 656 residues long: Leucine-rich repeat-containing protein 43 (656 aa).

Acidic residues predominate over residues 1–13 (MEASYESESESES). A disordered region spans residues 1–25 (MEASYESESESESEAGPGTQRPGTG). LRR repeat units lie at residues 150-170 (KLEE…TNLP), 172-193 (TLKV…CAHP), 196-215 (GLQH…ESLY), and 223-244 (NLVS…VTSL). One can recognise an LRRCT domain in the interval 258–296 (NPLALVPYYRGLTIDSLAQLCVLDDITVSPNEKHLFRGL). Residues 512–554 (LSAKKGKGEKDKKGKEKDRTGKGEKEPAKEWKVLKKKKEPPKE) are disordered. The span at 517 to 544 (GKGEKDKKGKEKDRTGKGEKEPAKEWKV) shows a compositional bias: basic and acidic residues.

This Homo sapiens (Human) protein is Leucine-rich repeat-containing protein 43 (LRRC43).